The chain runs to 75 residues: Cytoplasmic envelopment protein 3 (75 aa).

Gly-2 carries N-myristoyl glycine; by host lipidation. Positions 53 to 65 (EGLEYDEDSENDE) are enriched in acidic residues. The segment at 53 to 75 (EGLEYDEDSENDELLFLPNKKPN) is disordered.

It belongs to the herpesviridae cytoplasmic envelopment protein 3 family. Interacts with BGLF2; this interaction is essential for the proper localization of each protein to the assembly complex and thus for the production of infectious virus. In terms of processing, myristoylation and palmitoylation (probably on one or more of the nearby cysteines at the N-terminus) enable membrane-binding and Golgi apparatus-specific targeting and are essential for efficient packaging. Post-translationally, phosphorylated. Phosphorylation does not seem to be required for recycling to the host Golgi apparatus. Packaging is selective for underphosphorylated forms.

It localises to the virion tegument. The protein resides in the virion membrane. It is found in the host cell membrane. The protein localises to the host Golgi apparatus membrane. Plays an important role in the cytoplasmic envelopment of tegument proteins and capsids during the assembly and egress processes. Also participates in viral entry at the fusion step probably by regulating the core fusion machinery. The chain is Cytoplasmic envelopment protein 3 from Homo sapiens (Human).